Reading from the N-terminus, the 187-residue chain is UPF0340 protein SPG_0604 (187 aa).

It belongs to the UPF0340 family.

This is UPF0340 protein SPG_0604 from Streptococcus pneumoniae serotype 19F (strain G54).